A 417-amino-acid polypeptide reads, in one-letter code: Cytoplasmic tRNA 2-thiolation protein 2 (417 aa).

Acidic residues predominate over residues 1–11 (MCSIVEDDFGD). A disordered region spans residues 1-24 (MCSIVEDDFGDEGGAHAMKEDTPQ). A compositionally biased stretch (basic and acidic residues) spans 13–22 (GGAHAMKEDT).

Belongs to the CTU2/NCS2 family.

The protein resides in the cytoplasm. Its pathway is tRNA modification; 5-methoxycarbonylmethyl-2-thiouridine-tRNA biosynthesis. In terms of biological role, plays a central role in 2-thiolation of mcm(5)S(2)U at tRNA wobble positions of tRNA(Lys), tRNA(Glu) and tRNA(Gln). May act by forming a heterodimer with NCS6/CTU1 that ligates sulfur from thiocarboxylated URM1 onto the uridine of tRNAs at wobble position. The polypeptide is Cytoplasmic tRNA 2-thiolation protein 2 (Anopheles gambiae (African malaria mosquito)).